The following is a 427-amino-acid chain: Enolase (427 aa).

Q163 provides a ligand contact to (2R)-2-phosphoglycerate. E205 functions as the Proton donor in the catalytic mechanism. Residues D242, E285, and D312 each coordinate Mg(2+). The (2R)-2-phosphoglycerate site is built by K337, R366, S367, and K388. The active-site Proton acceptor is the K337.

It belongs to the enolase family. The cofactor is Mg(2+).

The protein localises to the cytoplasm. Its subcellular location is the secreted. The protein resides in the cell surface. It carries out the reaction (2R)-2-phosphoglycerate = phosphoenolpyruvate + H2O. It participates in carbohydrate degradation; glycolysis; pyruvate from D-glyceraldehyde 3-phosphate: step 4/5. In terms of biological role, catalyzes the reversible conversion of 2-phosphoglycerate (2-PG) into phosphoenolpyruvate (PEP). It is essential for the degradation of carbohydrates via glycolysis. The sequence is that of Enolase from Dechloromonas aromatica (strain RCB).